The following is a 275-amino-acid chain: Small ribosomal subunit protein uS3 (275 aa).

Residues 38-106 (IRRLLSSGLE…QVQLNILEVK (69 aa)) form the KH type-2 domain. The segment at 217–275 (AVPAGADRPRRERPAGSRPRRSGASGTTATGTEAGRAVGSEEPAAAESATTPEAQSTES) is disordered. Positions 238 to 275 (SGASGTTATGTEAGRAVGSEEPAAAESATTPEAQSTES) are enriched in low complexity.

It belongs to the universal ribosomal protein uS3 family. In terms of assembly, part of the 30S ribosomal subunit. Forms a tight complex with proteins S10 and S14.

Functionally, binds the lower part of the 30S subunit head. Binds mRNA in the 70S ribosome, positioning it for translation. This is Small ribosomal subunit protein uS3 from Mycobacterium marinum (strain ATCC BAA-535 / M).